The following is a 269-amino-acid chain: Tryptophan synthase alpha chain (269 aa).

Catalysis depends on proton acceptor residues Glu-49 and Asp-60.

The protein belongs to the TrpA family. As to quaternary structure, tetramer of two alpha and two beta chains.

It catalyses the reaction (1S,2R)-1-C-(indol-3-yl)glycerol 3-phosphate + L-serine = D-glyceraldehyde 3-phosphate + L-tryptophan + H2O. It participates in amino-acid biosynthesis; L-tryptophan biosynthesis; L-tryptophan from chorismate: step 5/5. The alpha subunit is responsible for the aldol cleavage of indoleglycerol phosphate to indole and glyceraldehyde 3-phosphate. The sequence is that of Tryptophan synthase alpha chain from Azotobacter vinelandii (strain DJ / ATCC BAA-1303).